The chain runs to 320 residues: tRNA(Ile)-lysidine synthase (320 aa).

Residue 33-38 (SGGPDS) coordinates ATP.

This sequence belongs to the tRNA(Ile)-lysidine synthase family.

It localises to the cytoplasm. The enzyme catalyses cytidine(34) in tRNA(Ile2) + L-lysine + ATP = lysidine(34) in tRNA(Ile2) + AMP + diphosphate + H(+). Ligates lysine onto the cytidine present at position 34 of the AUA codon-specific tRNA(Ile) that contains the anticodon CAU, in an ATP-dependent manner. Cytidine is converted to lysidine, thus changing the amino acid specificity of the tRNA from methionine to isoleucine. This is tRNA(Ile)-lysidine synthase from Mycolicibacterium paratuberculosis (strain ATCC BAA-968 / K-10) (Mycobacterium paratuberculosis).